A 395-amino-acid chain; its full sequence is Glutamyl-tRNA reductase (395 aa).

Residues 45-48, Ser87, 92-94, and Gln98 contribute to the substrate site; these read TCNR and EDQ. Cys46 functions as the Nucleophile in the catalytic mechanism. Position 167-172 (167-172) interacts with NADP(+); sequence GAGEMG.

This sequence belongs to the glutamyl-tRNA reductase family. Homodimer.

It carries out the reaction (S)-4-amino-5-oxopentanoate + tRNA(Glu) + NADP(+) = L-glutamyl-tRNA(Glu) + NADPH + H(+). The protein operates within porphyrin-containing compound metabolism; protoporphyrin-IX biosynthesis; 5-aminolevulinate from L-glutamyl-tRNA(Glu): step 1/2. Catalyzes the NADPH-dependent reduction of glutamyl-tRNA(Glu) to glutamate 1-semialdehyde (GSA). The sequence is that of Glutamyl-tRNA reductase from Methanosphaera stadtmanae (strain ATCC 43021 / DSM 3091 / JCM 11832 / MCB-3).